The following is a 122-amino-acid chain: Large ribosomal subunit protein bL12 (122 aa).

This sequence belongs to the bacterial ribosomal protein bL12 family. In terms of assembly, homodimer. Part of the ribosomal stalk of the 50S ribosomal subunit. Forms a multimeric L10(L12)X complex, where L10 forms an elongated spine to which 2 to 4 L12 dimers bind in a sequential fashion. Binds GTP-bound translation factors.

Its function is as follows. Forms part of the ribosomal stalk which helps the ribosome interact with GTP-bound translation factors. Is thus essential for accurate translation. The sequence is that of Large ribosomal subunit protein bL12 from Vibrio campbellii (strain ATCC BAA-1116).